Consider the following 417-residue polypeptide: Nuclear envelope integral membrane protein 2 (417 aa).

An N-terminal signal peptide occupies residues 1-24; that stretch reads MGPRQGRWWLLLWLPPLATLPVRG. Transmembrane regions (helical) follow at residues 148–168, 177–197, 207–227, 239–259, and 280–300; these read NIMD…FFYA, FYYS…VLLL, TFWA…CQLM, IYVL…CYKH, and LVLV…IILL.

This sequence belongs to the NEMP family.

Its subcellular location is the nucleus inner membrane. This is Nuclear envelope integral membrane protein 2 (NEMP2) from Homo sapiens (Human).